Reading from the N-terminus, the 238-residue chain is Cysteine-rich venom protein kaouthin-2 (238 aa).

The signal sequence occupies residues Met-1–Gly-19. A propeptide spanning residues Thr-20–Ser-25 is cleaved from the precursor. One can recognise an SCP domain in the interval Val-38–Tyr-164. Disulfide bonds link Cys-75/Cys-153, Cys-92/Cys-165, Cys-148/Cys-162, Cys-184/Cys-191, Cys-187/Cys-196, Cys-200/Cys-233, Cys-209/Cys-227, and Cys-218/Cys-231. The 34-residue stretch at Cys-200–Cys-233 folds into the ShKT domain.

Expressed by the venom gland.

It is found in the secreted. The polypeptide is Cysteine-rich venom protein kaouthin-2 (Naja kaouthia (Monocled cobra)).